The primary structure comprises 226 residues: MKRMRLKAVLFDMDGTLLDTAPDFIAITQAMRAAHGLPPVDEQRVRDVVSGGARAMVAAAFGLSLDSPEVEPLRQEFLDRYQEHCAVLSRPYDGIPELLAAIEKAGLIWGVVTNKPVRFAEPIMQRLGYAERSRVLVCPDHVTRSKPDPEPLLLACSQLGIDPSRVLFIGDDLRDIESGRDAGTKTAAVRYGYIHPEDNPAHWGADVIVDHPRELIDVLDRALCDC.

The active-site Nucleophile is the Asp-12. Mg(2+)-binding residues include Asp-12, Asp-14, and Asp-171. Catalysis depends on Asp-14, which acts as the Proton donor.

This sequence belongs to the HAD-like hydrolase superfamily. CbbY/CbbZ/Gph/YieH family. Phosphatase MupP subfamily. Mg(2+) serves as cofactor.

It catalyses the reaction N-acetyl-D-muramate 6-phosphate + H2O = N-acetyl-D-muramate + phosphate. It functions in the pathway cell wall biogenesis; peptidoglycan recycling. Functionally, specifically catalyzes the dephosphorylation of N-acetylmuramate 6-phosphate (MurNAc-6P) to MurNac. Is involved in peptidoglycan recycling as part of a cell wall recycling pathway that bypasses de novo biosynthesis of the peptidoglycan precursor UDP-MurNAc. Plays a role in intrinsic resistance to fosfomycin, which targets the de novo synthesis of UDP-MurNAc. The sequence is that of N-acetylmuramic acid 6-phosphate phosphatase from Pseudomonas aeruginosa (strain ATCC 15692 / DSM 22644 / CIP 104116 / JCM 14847 / LMG 12228 / 1C / PRS 101 / PAO1).